Consider the following 389-residue polypeptide: Probable transcription factor FL (389 aa).

Disordered regions lie at residues 1 to 41 (MDPN…ANVP) and 140 to 226 (EHDM…HPFV). Residues 19–39 (PPAPAPVPPPPPPPPPPPPAN) show a composition bias toward pro residues. Over residues 159-180 (VTGKKQAKKGSAARKGKKARRK) the composition is skewed to basic residues. The Nuclear localization signal motif lies at 161–168 (GKKQAKKG). Residues 190 to 201 (QEDEMDCCDEDG) are compositionally biased toward acidic residues. DNA-binding regions lie at residues 221–225 (REHPF), 290–297 (NKPKMRHY), and 361–364 (YVPT).

It belongs to the FLO/LFY family. In terms of assembly, interacts with APO1. In very young panicle but not in mature florets, mature leaves, roots or apical meristems.

The protein localises to the nucleus. In terms of biological role, probable transcription factor. Together with APO1, involved in the temporal regulation of meristem size and identity during both vegetative and reproductive developments through interaction with APO1. Promotes flowering. The polypeptide is Probable transcription factor FL (Oryza sativa subsp. japonica (Rice)).